The following is a 212-amino-acid chain: MNLFRFLGDLSHLLAIILLLLKIWKSRSCAGISGKSQVLFAVVFTARYLDLFTNYISLYNTCMKVVYIACSFTTVWMIYSKFKATYDGNHDTFRVEFLVVPTAILAFLVNHDFTPLEILWTFSIYLESVAILPQLFMVSKTGEAETITSHYLFALGVYRTLYLFNWIWRYHFEGFFDLIAIVAGLVQTVLYCDFFYLYITKVLKGKKLSLPA.

The Lumenal segment spans residues 1–4 (MNLF). Residues 5 to 24 (RFLGDLSHLLAIILLLLKIW) traverse the membrane as a helical segment. Topologically, residues 25 to 32 (KSRSCAGI) are cytoplasmic. The helical transmembrane segment at 33–52 (SGKSQVLFAVVFTARYLDLF) threads the bilayer. An interaction with the K-D-E-L motif on target proteins region spans residues 47–48 (RY). Residues 53 to 58 (TNYISL) lie on the Lumenal side of the membrane. Residues 59-79 (YNTCMKVVYIACSFTTVWMIY) traverse the membrane as a helical segment. At 80–92 (SKFKATYDGNHDT) the chain is on the cytoplasmic side. Residues 93 to 110 (FRVEFLVVPTAILAFLVN) traverse the membrane as a helical segment. At 111–116 (HDFTPL) the chain is on the lumenal side. The chain crosses the membrane as a helical span at residues 117-135 (EILWTFSIYLESVAILPQL). The Cytoplasmic segment spans residues 136 to 149 (FMVSKTGEAETITS). Residues 150-168 (HYLFALGVYRTLYLFNWIW) form a helical membrane-spanning segment. The segment at 159–169 (RTLYLFNWIWR) is interaction with the K-D-E-L motif on target proteins. At 169 to 178 (RYHFEGFFDL) the chain is on the lumenal side. The helical transmembrane segment at 179–199 (IAIVAGLVQTVLYCDFFYLYI) threads the bilayer. The Cytoplasmic segment spans residues 200–212 (TKVLKGKKLSLPA). Residues 204 to 207 (KGKK) are important for recycling of cargo proteins with the sequence motif K-D-E-L from the Golgi to the endoplasmic reticulum. Phosphoserine; by PKA is present on Ser-209.

It belongs to the ERD2 family. As to quaternary structure, upon ligand binding the receptor oligomerizes and interacts with components of the transport machinery such as ARFGAP1 and ARF1. Post-translationally, phosphorylation by PKA at Ser-209 is required for endoplasmic reticulum retention function.

It is found in the golgi apparatus membrane. The protein localises to the cytoplasmic vesicle. Its subcellular location is the COPI-coated vesicle membrane. The protein resides in the endoplasmic reticulum membrane. It localises to the endoplasmic reticulum-Golgi intermediate compartment membrane. Functionally, receptor for the C-terminal sequence motif K-D-E-L that is present on endoplasmic reticulum resident proteins and that mediates their recycling from the Golgi back to the endoplasmic reticulum. The protein is ER lumen protein-retaining receptor 1 (Kdelr1) of Mus musculus (Mouse).